The sequence spans 259 residues: Gasdermin bGSDM (259 aa).

Residue Cys-3 is the site of S-palmitoyl cysteine attachment. 4 beta stranded membrane-spanning segments follow: residues 70–86 (FQFR…AASV), 98–116 (SGSF…IQLS), 162–179 (GIRI…DLSA), and 187–203 (AKAK…SYAF). The interval 244–259 (PFAFIGDDAFVDLPES) is C-terminal region.

The protein belongs to the bacterial gasdermin family. In terms of assembly, monomer in solution. As to quaternary structure, forms large, homooligomeric ring-shaped pores when inserted in membranes. Palmitoylation helps stabilize the inactive state; may self palmitoylate. Palmitoylation plays a significant role in pore formation.

Its subcellular location is the cytoplasm. It localises to the cell inner membrane. The full-length protein before cleavage is inactive: intramolecular interactions between the N-terminal domain and the C-terminal region as well as the lipid modification, mediate autoinhibition. The pyroptosis-like-inducing activity is carried by the released N-terminal domain (Gasdermin bGSDM, N-terminus). Its function is as follows. Precursor of a pore-forming protein involved in defense against bacteriophages. Expression of bGSDM and the neighboring protease gene (Ga0098714_109514) is toxic in E.coli on solid medium. Cleavage of this precursor by its dedicated protease releases the active moiety (gasdermin bGSDM, N-terminus) which inserts into membranes, forming pores and triggering cell death. In terms of biological role, pore-forming protein that causes membrane permeabilization via a pyroptosis-like activity. Makes ring-like pores when released. In Bradyrhizobium tropiciagri, this protein is Gasdermin bGSDM.